The primary structure comprises 343 residues: Twinfilin (343 aa).

ADF-H domains are found at residues glutamate 11–arginine 135 and glutamate 184–histidine 312. A disordered region spans residues arginine 319–aspartate 343.

It belongs to the actin-binding proteins ADF family. Twinfilin subfamily. As to quaternary structure, interacts with G-actin; ADP-actin form.

Its subcellular location is the cytoplasm. It is found in the cytoskeleton. It localises to the cell cortex. Actin-binding protein involved in motile and morphological processes. Inhibits actin polymerization, likely by sequestering G-actin. This chain is Twinfilin (twf), found in Drosophila melanogaster (Fruit fly).